A 196-amino-acid chain; its full sequence is Peroxiredoxin TSA1-B (196 aa).

Residues 3-161 form the Thioredoxin domain; sequence PVVQQPAPSF…SLRLLEAFQF (159 aa). Substrate is bound at residue 45–47; it reads TFV. The Cysteine sulfenic acid (-SOH) intermediate role is filled by Cys48. Arg124 is a binding site for substrate. The interval 173-196 is disordered; it reads WHPGDETIKPSPEASKEYFNKVNK. The span at 175–196 shows a compositional bias: basic and acidic residues; the sequence is PGDETIKPSPEASKEYFNKVNK.

Belongs to the peroxiredoxin family. AhpC/Prx1 subfamily. As to quaternary structure, homodimer; disulfide-linked, upon oxidation.

Its subcellular location is the cell surface. It localises to the nucleus. The protein resides in the cytoplasm. The catalysed reaction is a hydroperoxide + [thioredoxin]-dithiol = an alcohol + [thioredoxin]-disulfide + H2O. In terms of biological role, thiol-specific peroxidase that catalyzes the reduction of hydrogen peroxide and organic hydroperoxides to water and alcohols, respectively. Plays a role in cell protection against oxidative stress by detoxifying peroxides and as sensor of hydrogen peroxide-mediated signaling events. Also involved in the correct composition of the hyphal cell wall. This is Peroxiredoxin TSA1-B from Candida albicans (strain SC5314 / ATCC MYA-2876) (Yeast).